Reading from the N-terminus, the 631-residue chain is 1-deoxy-D-xylulose-5-phosphate synthase (631 aa).

Thiamine diphosphate contacts are provided by residues histidine 87 and 128 to 130; that span reads GHS. A Mg(2+)-binding site is contributed by aspartate 159. Residues 160–161, asparagine 188, phenylalanine 295, and glutamate 377 each bind thiamine diphosphate; that span reads GA. Asparagine 188 is a Mg(2+) binding site.

Belongs to the transketolase family. DXPS subfamily. In terms of assembly, homodimer. Requires Mg(2+) as cofactor. Thiamine diphosphate serves as cofactor.

It carries out the reaction D-glyceraldehyde 3-phosphate + pyruvate + H(+) = 1-deoxy-D-xylulose 5-phosphate + CO2. It functions in the pathway metabolic intermediate biosynthesis; 1-deoxy-D-xylulose 5-phosphate biosynthesis; 1-deoxy-D-xylulose 5-phosphate from D-glyceraldehyde 3-phosphate and pyruvate: step 1/1. Functionally, catalyzes the acyloin condensation reaction between C atoms 2 and 3 of pyruvate and glyceraldehyde 3-phosphate to yield 1-deoxy-D-xylulose-5-phosphate (DXP). The protein is 1-deoxy-D-xylulose-5-phosphate synthase of Pseudomonas putida (strain GB-1).